A 316-amino-acid chain; its full sequence is Deoxyribonuclease-1-like 1 (316 aa).

The N-terminal stretch at 1 to 28 is a signal peptide; that stretch reads MHSSGGFQKAIHGHALLLLLLLASGAET. Catalysis depends on residues Glu107 and His158. Cys197 and Cys234 are oxidised to a cystine. A glycan (N-linked (GlcNAc...) asparagine) is linked at Asn271.

This sequence belongs to the DNase I family.

The protein resides in the endoplasmic reticulum. The protein is Deoxyribonuclease-1-like 1 (DNASE1L1) of Bos taurus (Bovine).